Consider the following 178-residue polypeptide: Translation initiation factor IF-3 (178 aa).

A disordered region spans residues 1 to 20 (MRRPFRATPVQKDGPRSNRD).

This sequence belongs to the IF-3 family. As to quaternary structure, monomer.

It is found in the cytoplasm. IF-3 binds to the 30S ribosomal subunit and shifts the equilibrium between 70S ribosomes and their 50S and 30S subunits in favor of the free subunits, thus enhancing the availability of 30S subunits on which protein synthesis initiation begins. The polypeptide is Translation initiation factor IF-3 (Brucella anthropi (strain ATCC 49188 / DSM 6882 / CCUG 24695 / JCM 21032 / LMG 3331 / NBRC 15819 / NCTC 12168 / Alc 37) (Ochrobactrum anthropi)).